A 185-amino-acid chain; its full sequence is Large ribosomal subunit protein uL5 (185 aa).

The protein belongs to the universal ribosomal protein uL5 family. In terms of assembly, part of the 50S ribosomal subunit; part of the 5S rRNA/L5/L18/L25 subcomplex. Contacts the 5S rRNA and the P site tRNA. Forms a bridge to the 30S subunit in the 70S ribosome.

Its function is as follows. This is one of the proteins that bind and probably mediate the attachment of the 5S RNA into the large ribosomal subunit, where it forms part of the central protuberance. In the 70S ribosome it contacts protein S13 of the 30S subunit (bridge B1b), connecting the 2 subunits; this bridge is implicated in subunit movement. Contacts the P site tRNA; the 5S rRNA and some of its associated proteins might help stabilize positioning of ribosome-bound tRNAs. This Streptomyces griseus subsp. griseus (strain JCM 4626 / CBS 651.72 / NBRC 13350 / KCC S-0626 / ISP 5235) protein is Large ribosomal subunit protein uL5.